A 420-amino-acid chain; its full sequence is tRNA(Ile)-lysidine synthase (420 aa).

28-33 (SGGLDS) is an ATP binding site.

Belongs to the tRNA(Ile)-lysidine synthase family.

It is found in the cytoplasm. It catalyses the reaction cytidine(34) in tRNA(Ile2) + L-lysine + ATP = lysidine(34) in tRNA(Ile2) + AMP + diphosphate + H(+). Functionally, ligates lysine onto the cytidine present at position 34 of the AUA codon-specific tRNA(Ile) that contains the anticodon CAU, in an ATP-dependent manner. Cytidine is converted to lysidine, thus changing the amino acid specificity of the tRNA from methionine to isoleucine. This is tRNA(Ile)-lysidine synthase from Hydrogenovibrio crunogenus (strain DSM 25203 / XCL-2) (Thiomicrospira crunogena).